Consider the following 284-residue polypeptide: Four and a half LIM domains protein 5 (284 aa).

Residues 8–32 form a C4-type zinc finger; sequence CQYCTASLLGKKYVLKDDSLFCVTC. LIM zinc-binding domains are found at residues 39-100, 101-160, 161-220, and 223-283; these read NYCE…ECSS, KCFH…KEFA, HYCN…LYAN, and VACS…MDSD.

In terms of assembly, interacts with CREM (via the third LIM domain). Interacts (via second LIM domain) with SPAG8.

The protein resides in the nucleus. Functionally, may be involved in the regulation of spermatogenesis. Stimulates CREM transcriptional activity in a phosphorylation-independent manner. In Macaca fascicularis (Crab-eating macaque), this protein is Four and a half LIM domains protein 5 (FHL5).